The sequence spans 1149 residues: MGLQFIYGRAGSGKSFHCLNSIKTKQNKDSNKKLVLIVPEQYTLQAERDLIKVLGTGGILKTEVLSFRRMAYRVLNEVGGITYPHIHPSGKNMIIYRILERLKDQFTIFHKSANCKGFVNTLSTLITELKRYNVRAESFDEVLQGLADDNYLSHKLKEIKLIYSEFDSMLVDRYRDTDDELTLLSSKLEGTEIYAKSEIWIDGFAGFTPQEVEVISKLIQQAENVHITMCTDILFDDVQADLTDVFAAVKKSCKKFVSIAESYGVKILPPVCLNTPNLPRFKDSRELQSLETNYCSYSYRAYQLPTQDIELFESVNIYTEIEECARDIIKQCRDNGMQFKDITVATRNLTGYENLIGVIFEQYNIPCFIDSKTEITNHPLVRMVLSMLEIFTENWSYESVFRYLKSGLTGIDNTKIDILENYVLACGIRGSRWTQEADWNTSIEFRPDDGQKPENDEMLLNINKTRNEIREPLIRFRNRTKGRRTAGDFCAGIYEYLVEIGVEQRIRNYIEKFTQSGQLRLAGEYQQVWNILMDVFDQAVEVMADETFGLEKFANVFKIGLAEYKISSIPASLDQVLVGSIEHIRSHEIKALYILGTNDGVFPSAGMSEGVLSDADREVLDKRGIELASDTKTRAFDEQYLIYRTLTTPKNYLRLSWPIADHEGRTMRPSTIISRMRKIFPKVTEKSNIVKPSADKQHIDLIASPIPAFNQLVCALRQKNEGIEQGEIWREIFAWFSGQDEWKQKCDAMINALKYRNIAAPVDKSKIRELYGKSPYFTVSRLEKYTSCPFAFYVQYGLGARERKIYRMSPPDVGTFMHAVIERFSKMVDENNYSWREFDRQWCSEQVSKIVDELLDSMKNTILGGSKRFKALAVRLKRVVTRAVWLITEHIRRSSFEPVGYEVDFGDGGAYPPMVIELDSGEKIRLVGRIDRIDALRAENGTYLRIVDYKSGEKDFKLSDVYYGLQMQLITYLDALWEYSDKSNGEKIIPGGILYFRIDDPMIRCTDNSTPEEIETAIMKKLKMKGLLLADVQLIKYMDNTIEGNSIIIPARINKGDVLGKSSAATIEQFTVLRSYVKQLLKDMCSELMKGNVPISPYKKKKLTSCSYCNYSSVCQFDQSQKENSFRMLHDREDNDIWKLMNEIDVKDN.

8–15 serves as a coordination point for ATP; the sequence is GRAGSGKS. [4Fe-4S] cluster-binding residues include cysteine 788, cysteine 1106, cysteine 1109, and cysteine 1115.

It belongs to the helicase family. AddB/RexB type 1 subfamily. As to quaternary structure, heterodimer of AddA and AddB. Requires Mg(2+) as cofactor. [4Fe-4S] cluster serves as cofactor.

Its function is as follows. The heterodimer acts as both an ATP-dependent DNA helicase and an ATP-dependent, dual-direction single-stranded exonuclease. Recognizes the chi site generating a DNA molecule suitable for the initiation of homologous recombination. The AddB subunit has 5' -&gt; 3' nuclease activity but not helicase activity. This is ATP-dependent helicase/deoxyribonuclease subunit B from Ruminiclostridium cellulolyticum (strain ATCC 35319 / DSM 5812 / JCM 6584 / H10) (Clostridium cellulolyticum).